A 594-amino-acid polypeptide reads, in one-letter code: APOBEC1 complementation factor (594 aa).

3 consecutive RRM domains span residues 56–134, 136–218, and 231–303; these read CEIF…ASVD, CRLF…WAEP, and KILY…LAKP. The tract at residues 359–408 is required for nuclear localization; the sequence is HFPATKGHLSNRALIRTPSVREIYMNVPVGAAGVRGLGGRGYLAYTGLGR. At Thr498 the chain carries Phosphothreonine.

In terms of assembly, part of the apolipoprotein B mRNA editing complex with APOBEC1. Interacts with TNPO2; TNPO2 may be responsible for transport of A1CF into the nucleus. Interacts with SYNCRIP. Interacts with CELF2/CUGBP2. Interacts with RBM47. As to expression, isoforms 1 and 2 are widely expressed while isoforms 3 and 4 are restricted to liver and small intestine.

The protein resides in the nucleus. Its subcellular location is the endoplasmic reticulum. It is found in the cytoplasm. Essential component of the apolipoprotein B mRNA editing enzyme complex which is responsible for the postranscriptional editing of a CAA codon for Gln to a UAA codon for stop in APOB mRNA. Binds to APOB mRNA and is probably responsible for docking the catalytic subunit, APOBEC1, to the mRNA to allow it to deaminate its target cytosine. The complex also seems to protect the edited APOB mRNA from nonsense-mediated decay. The protein is APOBEC1 complementation factor (A1cf) of Rattus norvegicus (Rat).